Here is a 186-residue protein sequence, read N- to C-terminus: Ribosome-recycling factor (186 aa).

A disordered region spans residues 135-162 (DGMDGLKKAEKDGDIGQDESRAQSERVQ).

The protein belongs to the RRF family.

Its subcellular location is the cytoplasm. In terms of biological role, responsible for the release of ribosomes from messenger RNA at the termination of protein biosynthesis. May increase the efficiency of translation by recycling ribosomes from one round of translation to another. In Sinorhizobium fredii (strain NBRC 101917 / NGR234), this protein is Ribosome-recycling factor.